We begin with the raw amino-acid sequence, 308 residues long: Maspardin (308 aa).

An AB hydrolase-1 domain is found at 87–159 (FCDGFRKLLD…NSFWLMPAFM (73 aa)).

It belongs to the AB hydrolase superfamily. As to quaternary structure, interacts with CD4. Interacts with ALDH16A1.

It localises to the cytoplasm. Functionally, may play a role as a negative regulatory factor in CD4-dependent T-cell activation. The chain is Maspardin (SPG21) from Macaca fascicularis (Crab-eating macaque).